The chain runs to 431 residues: Ornithine decarboxylase (431 aa).

The residue at position 94 (K94) is an N6-(pyridoxal phosphate)lysine. Pyridoxal 5'-phosphate-binding positions include S226, G264, and 297 to 300; that span reads EPGR. 340–341 is a binding site for substrate; the sequence is YD. Residue C376 is the Proton donor; shared with dimeric partner of the active site. D377 provides a ligand contact to substrate. Position 405 (Y405) interacts with pyridoxal 5'-phosphate.

This sequence belongs to the Orn/Lys/Arg decarboxylase class-II family. As to quaternary structure, homodimer. Only the dimer is catalytically active, as the active sites are constructed of residues from both monomers. The cofactor is pyridoxal 5'-phosphate.

The catalysed reaction is L-ornithine + H(+) = putrescine + CO2. The protein operates within amine and polyamine biosynthesis; putrescine biosynthesis via L-ornithine pathway; putrescine from L-ornithine: step 1/1. With respect to regulation, inhibited by antizyme (AZ) in response to polyamine levels. AZ inhibits the assembly of the functional homodimer by binding to ODC monomers and targeting them for ubiquitin-independent proteolytic destruction by the 26S proteasome. Functionally, catalyzes the first and rate-limiting step of polyamine biosynthesis that converts ornithine into putrescine, which is the precursor for the polyamines, spermidine and spermine. Polyamines are essential for cell proliferation and are implicated in cellular processes, ranging from DNA replication to apoptosis. The chain is Ornithine decarboxylase from Datura stramonium (Jimsonweed).